The chain runs to 206 residues: Large ribosomal subunit protein uL4 (206 aa).

The protein belongs to the universal ribosomal protein uL4 family. In terms of assembly, part of the 50S ribosomal subunit.

Functionally, one of the primary rRNA binding proteins, this protein initially binds near the 5'-end of the 23S rRNA. It is important during the early stages of 50S assembly. It makes multiple contacts with different domains of the 23S rRNA in the assembled 50S subunit and ribosome. Its function is as follows. Forms part of the polypeptide exit tunnel. This is Large ribosomal subunit protein uL4 from Rhodopseudomonas palustris (strain BisA53).